Consider the following 425-residue polypeptide: Trigger factor (425 aa).

Residues 163-248 (GDTAVIDFEG…VHEIKTKELP (86 aa)) form the PPIase FKBP-type domain.

Belongs to the FKBP-type PPIase family. Tig subfamily.

Its subcellular location is the cytoplasm. It catalyses the reaction [protein]-peptidylproline (omega=180) = [protein]-peptidylproline (omega=0). Involved in protein export. Acts as a chaperone by maintaining the newly synthesized protein in an open conformation. Functions as a peptidyl-prolyl cis-trans isomerase. In Bacillus anthracis (strain A0248), this protein is Trigger factor.